Consider the following 589-residue polypeptide: Transmembrane 9 superfamily member 5 (589 aa).

The signal sequence occupies residues 1-24; that stretch reads MAQFLLTVLQVLLALTFWIGIGSG. The Lumenal segment spans residues 25–227; sequence SSNHYNAGDH…SFHPISQKIH (203 aa). Residues 228–248 form a helical membrane-spanning segment; the sequence is FFSFLNSITVVVLLIGLISFL. The Cytoplasmic portion of the chain corresponds to 249 to 291; it reads FMRHLKNELRSYSIGDEEERKEAGWKLVHSDVFRCPRNISWLC. The chain crosses the membrane as a helical span at residues 292-312; sequence AILGTGTQLLILIIALFALAF. Residues 313–321 are Lumenal-facing; the sequence is TGFLYPYNR. The helical transmembrane segment at 322–342 threads the bilayer; that stretch reads GMLLTSLVIMYTLTSIVAGYT. The Cytoplasmic segment spans residues 343-361; that stretch reads STSFHSQFEGNKQKRSVRL. The chain crosses the membrane as a helical span at residues 362-382; it reads AGILYPVPFFIILSVLNTVAI. At 383–394 the chain is on the lumenal side; it reads TYGATAALPFGT. A helical membrane pass occupies residues 395–415; sequence IVIIILIFTLLNIPFLMLGGV. Topologically, residues 416 to 450 are cytoplasmic; the sequence is LGNRFGLLEFQPPSAVKRNPREIPPQNWYRRKLYQ. The helical transmembrane segment at 451-471 threads the bilayer; that stretch reads VFLGGFVPFSAVVLEWHQLYA. Residues 472–482 lie on the Lumenal side of the membrane; that stretch reads SLWGFKIYTSP. Residues 483–503 form a helical membrane-spanning segment; sequence GIMLFTFIVLIFLSSSVGIIL. Residues 504–518 are Cytoplasmic-facing; the sequence is TYIQLSGEDHEWWWR. The helical transmembrane segment at 519-539 threads the bilayer; sequence SILCGGFTAVFMYGYGVLFYL. The Lumenal portion of the chain corresponds to 540–550; that stretch reads RSDMTGFLQLS. A helical membrane pass occupies residues 551–571; the sequence is FYLGYTALLCYALFLVLGTIS. The Cytoplasmic portion of the chain corresponds to 572–589; it reads FLASLMFIRHIYRSVKLE. An Endoplasmic reticulum export signal motif is present at residues 578–583; that stretch reads FIRHIY. Residues 587 to 589 carry the Golgi retention signal motif; sequence KLE.

It belongs to the nonaspanin (TM9SF) (TC 9.A.2) family. As to expression, expressed in the root cap and in giant cells.

It localises to the endosome membrane. The protein resides in the golgi apparatus membrane. The chain is Transmembrane 9 superfamily member 5 from Arabidopsis thaliana (Mouse-ear cress).